An 896-amino-acid polypeptide reads, in one-letter code: C-type lectin domain-containing protein 180 (896 aa).

The N-terminal stretch at 1-18 (MRHLIFTGFVLTLTALEA) is a signal peptide. The 125-residue stretch at 54-178 (PWGDLYQFRA…CESTSPDHHA (125 aa)) folds into the C-type lectin domain. Asparagine 133 is a glycosylation site (N-linked (GlcNAc...) asparagine). Residues cysteine 154 and cysteine 169 are joined by a disulfide bond. 2 N-linked (GlcNAc...) asparagine glycosylation sites follow: asparagine 221 and asparagine 235. Disordered stretches follow at residues 243-264 (STVK…SVSK), 354-436 (VKQE…LAPE), 492-519 (EKLE…EEQK), and 557-809 (KVKA…TTKP). A compositionally biased stretch (acidic residues) spans 250 to 260 (SEEETSSEEEE). 2 stretches are compositionally biased toward basic and acidic residues: residues 354 to 382 (VKQE…KISE) and 395 to 406 (DMPKADIEPPKE). Residues 407–426 (EDCDEEGSGSGSGEEDEKDE) show a composition bias toward acidic residues. A compositionally biased stretch (basic and acidic residues) spans 427–436 (SSEKIELAPE). Composition is skewed to basic and acidic residues over residues 575 to 590 (KSAK…KVGN), 607 to 663 (QNRE…ETKL), and 683 to 692 (EEPKSDKDSE). A compositionally biased stretch (low complexity) spans 727–739 (STTTESTTVAVKE). Positions 740 to 768 (VPVDEIEKIAKLEAKQHTEDEKVTVETKQ) are enriched in basic and acidic residues. Positions 773 to 809 (TPAPTTSEKTSTTAAPSTKPAEETTTTTEAPSTTTKP) are enriched in low complexity.

It is found in the secreted. In Caenorhabditis elegans, this protein is C-type lectin domain-containing protein 180 (clec-180).